Consider the following 297-residue polypeptide: N-acetylneuraminate lyase (297 aa).

Aceneuramate-binding residues include S47 and T48. Y137 acts as the Proton donor in catalysis. The active-site Schiff-base intermediate with substrate is K165. Aceneuramate contacts are provided by T167, G189, D191, E192, and S208.

The protein belongs to the DapA family. NanA subfamily. In terms of assembly, homotetramer.

The protein resides in the cytoplasm. The catalysed reaction is aceneuramate = aldehydo-N-acetyl-D-mannosamine + pyruvate. It participates in amino-sugar metabolism; N-acetylneuraminate degradation; D-fructose 6-phosphate from N-acetylneuraminate: step 1/5. In terms of biological role, catalyzes the reversible aldol cleavage of N-acetylneuraminic acid (sialic acid; Neu5Ac) to form pyruvate and N-acetylmannosamine (ManNAc) via a Schiff base intermediate. This chain is N-acetylneuraminate lyase, found in Escherichia coli (strain SMS-3-5 / SECEC).